A 190-amino-acid polypeptide reads, in one-letter code: Guanylate kinase (190 aa).

The 183-residue stretch at 3–185 (NYIFIISAPS…SLEQLCKYFE (183 aa)) folds into the Guanylate kinase-like domain. 10–17 (APSGAGKS) serves as a coordination point for ATP.

The protein belongs to the guanylate kinase family.

Its subcellular location is the cytoplasm. The catalysed reaction is GMP + ATP = GDP + ADP. Functionally, essential for recycling GMP and indirectly, cGMP. The chain is Guanylate kinase from Francisella tularensis subsp. holarctica (strain LVS).